A 308-amino-acid polypeptide reads, in one-letter code: Ribosomal RNA small subunit methyltransferase H (308 aa).

Residues 33-35, Asp51, Phe82, Asp96, and Gln103 each bind S-adenosyl-L-methionine; that span reads GGY.

Belongs to the methyltransferase superfamily. RsmH family.

It localises to the cytoplasm. It carries out the reaction cytidine(1402) in 16S rRNA + S-adenosyl-L-methionine = N(4)-methylcytidine(1402) in 16S rRNA + S-adenosyl-L-homocysteine + H(+). Specifically methylates the N4 position of cytidine in position 1402 (C1402) of 16S rRNA. The chain is Ribosomal RNA small subunit methyltransferase H from Rickettsia canadensis (strain McKiel).